Consider the following 305-residue polypeptide: tRNA N6-adenosine threonylcarbamoyltransferase (305 aa).

The Fe cation site is built by H108 and H112. Substrate-binding positions include 130–134, D163, G176, D180, and N264; that span reads VVSGG. Position 288 (D288) interacts with Fe cation.

It belongs to the KAE1 / TsaD family. Fe(2+) serves as cofactor.

It localises to the cytoplasm. The catalysed reaction is L-threonylcarbamoyladenylate + adenosine(37) in tRNA = N(6)-L-threonylcarbamoyladenosine(37) in tRNA + AMP + H(+). Its function is as follows. Required for the formation of a threonylcarbamoyl group on adenosine at position 37 (t(6)A37) in tRNAs that read codons beginning with adenine. Is involved in the transfer of the threonylcarbamoyl moiety of threonylcarbamoyl-AMP (TC-AMP) to the N6 group of A37, together with TsaE and TsaB. TsaD likely plays a direct catalytic role in this reaction. The sequence is that of tRNA N6-adenosine threonylcarbamoyltransferase from Mycoplasma mobile (strain ATCC 43663 / 163K / NCTC 11711) (Mesomycoplasma mobile).